A 620-amino-acid polypeptide reads, in one-letter code: Guanylate cyclase soluble subunit beta-1 (620 aa).

His-105 contributes to the heme binding site. The 134-residue stretch at 421–554 folds into the Guanylate cyclase domain; it reads TILFSGIVGF…NTVNLTSRTE (134 aa).

The protein belongs to the adenylyl cyclase class-4/guanylyl cyclase family. In terms of assembly, the active enzyme is formed by a heterodimer of an alpha and a beta subunit. Heterodimer with GUCY1A1. Can also form inactive homodimers in vitro. Heme is required as a cofactor.

The protein localises to the cytoplasm. The enzyme catalyses GTP = 3',5'-cyclic GMP + diphosphate. Activated by nitric oxide in the presence of magnesium or manganese ions. Functionally, mediates responses to nitric oxide (NO) by catalyzing the biosynthesis of the signaling molecule cGMP. This is Guanylate cyclase soluble subunit beta-1 (Gucy1b1) from Mus musculus (Mouse).